The chain runs to 559 residues: Paxillin (559 aa).

Residues 3–15 (DLDALLADLESTT) carry the LD motif 1 motif. The interval 17–139 (HISKRPVFLT…SPTMTSTSLG (123 aa)) is disordered. A Phosphotyrosine modification is found at Tyr-31. Residues 45–54 (VPPPVPPPPS) are compositionally biased toward pro residues. Residues 79-98 (QQPQSQSPIYSSSAKSSSAS) show a composition bias toward low complexity. Residue Tyr-118 is modified to Phosphotyrosine; by FAK1. Polar residues predominate over residues 121-137 (PNKQKSAEPSPTMTSTS). An LD motif 2 motif is present at residues 144-156 (ELDRLLLELNAVQ). Disordered regions lie at residues 158-213 (NPPS…GIED) and 225-262 (LESS…SASS). The short motif at 217–229 (SVESLLDELESSV) is the LD motif 3 element. A compositionally biased stretch (polar residues) spans 237–262 (TVSQGEVSSPQRVNASQQQTRISASS). A required for binding to PARVA and ILK region spans residues 263–282 (ATRELDELMASLSDFKFMAQ). 2 consecutive short sequence motifs (LD motif) follow at residues 266 to 277 (ELDELMASLSDF) and 301 to 313 (QLDT…QSDL). Positions 281-301 (AQGKAGGSSSPPSTTPKPGSQ) are disordered. 4 LIM zinc-binding domains span residues 326–376 (CGAC…CEKD), 385–435 (CYYC…CRKD), 444–494 (CGGC…CEVH), and 503–553 (CSGC…CQNC).

Interacts (via LD motif 4) with PARVA/PARVIN and ILK. Phosphorylated on tyrosine residues during integrin-mediated cell adhesion, embryonic development, fibroblast transformation and following stimulation of cells by mitogens.

Its subcellular location is the cytoplasm. It is found in the cytoskeleton. The protein resides in the cell junction. The protein localises to the focal adhesion. It localises to the cell cortex. Functionally, cytoskeletal protein involved in actin-membrane attachment at sites of cell adhesion to the extracellular matrix (focal adhesion). Binds in vitro to vinculin as well as to the SH3 domain of c-SRC and, when tyrosine phosphorylated, to the SH2 domain of v-CRK. The polypeptide is Paxillin (PXN) (Gallus gallus (Chicken)).